Consider the following 482-residue polypeptide: FAD-dependent monooxygenase esdpE (482 aa).

The N-terminal stretch at 1-21 is a signal peptide; that stretch reads MGAERLKVIIVGGSIAGLTLA. Glu35 and Arg108 together coordinate FAD. N-linked (GlcNAc...) asparagine glycosylation occurs at Asn243. Asp308 and Ala321 together coordinate FAD. Residues 440–460 traverse the membrane as a helical segment; that stretch reads LFSGSLLLIMSVALLFGVICW.

This sequence belongs to the paxM FAD-dependent monooxygenase family. FAD is required as a cofactor.

Its subcellular location is the membrane. It participates in secondary metabolite biosynthesis; terpenoid biosynthesis. FAD-dependent monooxygenase; part of the cluster that mediates the biosynthesis of shearones, diterpenoid pyrones (DPs) which are structurally diverse meroterpenoids consisting of a diterpene linked by a pyrone, and which may exhibit a range of bioactivities. Within the pathway, esdpE takes part to the biosynthesis of the molecular scaffold by catalyzing the formation of an (S)-epoxide ring at the terminal olefin of the geranylgeranyl group. The molecular scaffold is commonly biosynthesized by a series of enzymes including the non-reducing polyketide synthase (NR-PKS) esdpA that generates an alpha-pyrone; the prenyltransferase esdpC that attaches a geranylgeranyl pyrophosphate (GGPP) produced by the GGPP synthase (GGPPS) esdpD onto the pyrone unit; the FAD-dependent monooxygenase esdpE that converts an olefin on the diterpene unit into an epoxide; and the terpene cyclase esdpB that catalyzes the cyclization reactions to give the molecular backbone shearone A. In the modification steps, esdpF oxidizes the hydroxy group to a ketone at C-3 and esdpG then attaches hydroxy groups at both C-11 and C-12. After that, esdpI hydroxylates at C-20 and esdpH hydroxylates at C-6'. The ether bridge is generated by nucleophilic attack of the hydroxy group at C-20 to the carbonyl carbon at C-3. EsdpH can also functions prior to esdpI. The different combinations of these modification enzymes lead to the production of diverse shearone derivatives, shearone I being the end product of the pathway. The alpha-ketoglutarate-dependent dioxygenase esdpJ seems not to be involved in this pathway. This is FAD-dependent monooxygenase esdpE from Penicillium shearii (Eupenicillium shearii).